We begin with the raw amino-acid sequence, 150 residues long: Large ribosomal subunit protein bL9 (150 aa).

This sequence belongs to the bacterial ribosomal protein bL9 family.

In terms of biological role, binds to the 23S rRNA. This Hydrogenovibrio crunogenus (strain DSM 25203 / XCL-2) (Thiomicrospira crunogena) protein is Large ribosomal subunit protein bL9.